We begin with the raw amino-acid sequence, 233 residues long: Large ribosomal subunit protein uL1 (233 aa).

This sequence belongs to the universal ribosomal protein uL1 family. Part of the 50S ribosomal subunit.

In terms of biological role, binds directly to 23S rRNA. The L1 stalk is quite mobile in the ribosome, and is involved in E site tRNA release. Functionally, protein L1 is also a translational repressor protein, it controls the translation of the L11 operon by binding to its mRNA. This Laribacter hongkongensis (strain HLHK9) protein is Large ribosomal subunit protein uL1.